The chain runs to 216 residues: UPF0502 protein Pmen_2627 (216 aa).

This sequence belongs to the UPF0502 family.

The chain is UPF0502 protein Pmen_2627 from Ectopseudomonas mendocina (strain ymp) (Pseudomonas mendocina).